We begin with the raw amino-acid sequence, 266 residues long: Proteasome subunit alpha type-1 (266 aa).

The protein belongs to the peptidase T1A family. In terms of assembly, the 26S proteasome consists of a 20S proteasome core and two 19S regulatory subunits. The 20S proteasome core is composed of 28 subunits that are arranged in four stacked rings, resulting in a barrel-shaped structure. The two end rings are each formed by seven alpha subunits, and the two central rings are each formed by seven beta subunits. The catalytic chamber with the active sites is on the inside of the barrel.

The protein localises to the cytoplasm. It localises to the nucleus. In terms of biological role, the proteasome is a multicatalytic proteinase complex which is characterized by its ability to cleave peptides with Arg, Phe, Tyr, Leu, and Glu adjacent to the leaving group at neutral or slightly basic pH. The proteasome has an ATP-dependent proteolytic activity. In Trypanosoma brucei brucei, this protein is Proteasome subunit alpha type-1.